Reading from the N-terminus, the 153-residue chain is Proline-rich membrane anchor 1 (153 aa).

Residues 1–35 (MLLRDLVLRHGCCWPSLLLHCALHPLWGLVQVTHA) form the signal peptide. The Extracellular segment spans residues 36–92 (EPQKSCSKVTDSCQHICQCRPPPPLPPPPPPPPPPRLLSAPAPNSTSCPAEDSWWSG). The PRAD domain occupies 56-70 (PPPPLPPPPPPPPPP). A compositionally biased stretch (pro residues) spans 59-71 (PLPPPPPPPPPPR). The segment at 59 to 79 (PLPPPPPPPPPPRLLSAPAPN) is disordered. The N-linked (GlcNAc...) asparagine glycan is linked to N79. A helical membrane pass occupies residues 93–113 (LVIIVAVVCASLVFLTVLVII). At 114 to 153 (CYKAIKRKPLRKDENGASVAEYPMSSSPSNKGVDVNAAVV) the chain is on the cytoplasmic side. Residues 133–153 (AEYPMSSSPSNKGVDVNAAVV) form a disordered region.

Interacts with ACHE, probably through disulfide bonds. Isoforms 1 and 2 are expressed in the adult brain. In matured cortical neurons, only isoform 1 is detectable.

It is found in the cell membrane. It localises to the cell junction. The protein resides in the synapse. Functionally, required to anchor acetylcholinesterase (ACHE) to the basal lamina of the neuromuscular junction and to the membrane of neuronal synapses in brain. Organizes ACHE into tetramers. The chain is Proline-rich membrane anchor 1 (Prima1) from Rattus norvegicus (Rat).